Reading from the N-terminus, the 692-residue chain is Elongation factor G (692 aa).

One can recognise a tr-type G domain in the interval 8-283 (DHVRNIGIMA…AVVDYFPSPS (276 aa)). Residues 17 to 24 (AHIDAGKT), 81 to 85 (DTPGH), and 135 to 138 (NKMD) contribute to the GTP site.

This sequence belongs to the TRAFAC class translation factor GTPase superfamily. Classic translation factor GTPase family. EF-G/EF-2 subfamily.

Its subcellular location is the cytoplasm. Its function is as follows. Catalyzes the GTP-dependent ribosomal translocation step during translation elongation. During this step, the ribosome changes from the pre-translocational (PRE) to the post-translocational (POST) state as the newly formed A-site-bound peptidyl-tRNA and P-site-bound deacylated tRNA move to the P and E sites, respectively. Catalyzes the coordinated movement of the two tRNA molecules, the mRNA and conformational changes in the ribosome. This is Elongation factor G from Magnetococcus marinus (strain ATCC BAA-1437 / JCM 17883 / MC-1).